The following is a 72-amino-acid chain: DNA-directed RNA polymerase subunit omega (72 aa).

It belongs to the RNA polymerase subunit omega family. As to quaternary structure, the RNAP catalytic core consists of 2 alpha, 1 beta, 1 beta' and 1 omega subunit. When a sigma factor is associated with the core the holoenzyme is formed, which can initiate transcription.

The enzyme catalyses RNA(n) + a ribonucleoside 5'-triphosphate = RNA(n+1) + diphosphate. In terms of biological role, promotes RNA polymerase assembly. Latches the N- and C-terminal regions of the beta' subunit thereby facilitating its interaction with the beta and alpha subunits. This Clostridium botulinum (strain Loch Maree / Type A3) protein is DNA-directed RNA polymerase subunit omega.